We begin with the raw amino-acid sequence, 382 residues long: 8-amino-7-oxononanoate synthase (382 aa).

Substrate-binding residues include arginine 22 and arginine 29. Residue 109–110 (GF) participates in pyridoxal 5'-phosphate binding. Histidine 134 is a binding site for substrate. Residues serine 182, 207 to 210 (DDAH), and 233 to 236 (TLSK) each bind pyridoxal 5'-phosphate. Residue lysine 236 is modified to N6-(pyridoxal phosphate)lysine. Threonine 345 contributes to the substrate binding site.

Belongs to the class-II pyridoxal-phosphate-dependent aminotransferase family. BioF subfamily. Homodimer. Requires pyridoxal 5'-phosphate as cofactor.

The enzyme catalyses 6-carboxyhexanoyl-[ACP] + L-alanine + H(+) = (8S)-8-amino-7-oxononanoate + holo-[ACP] + CO2. Its pathway is cofactor biosynthesis; biotin biosynthesis. In terms of biological role, catalyzes the decarboxylative condensation of pimeloyl-[acyl-carrier protein] and L-alanine to produce 8-amino-7-oxononanoate (AON), [acyl-carrier protein], and carbon dioxide. This is 8-amino-7-oxononanoate synthase from Granulibacter bethesdensis (strain ATCC BAA-1260 / CGDNIH1).